We begin with the raw amino-acid sequence, 242 residues long: Uridylate kinase (242 aa).

Lys12–Gly15 contributes to the ATP binding site. Residues Gly20–Gly25 form an involved in allosteric activation by GTP region. Gly54 contacts UMP. ATP contacts are provided by Gly55 and Arg59. UMP is bound by residues Asp74 and Thr135–Thr142. Positions 163, 169, and 172 each coordinate ATP.

Belongs to the UMP kinase family. In terms of assembly, homohexamer.

The protein resides in the cytoplasm. The catalysed reaction is UMP + ATP = UDP + ADP. It functions in the pathway pyrimidine metabolism; CTP biosynthesis via de novo pathway; UDP from UMP (UMPK route): step 1/1. Its activity is regulated as follows. Allosterically activated by GTP. Inhibited by UTP. Functionally, catalyzes the reversible phosphorylation of UMP to UDP. The chain is Uridylate kinase from Listeria innocua serovar 6a (strain ATCC BAA-680 / CLIP 11262).